The sequence spans 147 residues: Large ribosomal subunit protein uL13 (147 aa).

The interval 126–147 is disordered; the sequence is GGPEHPHAAQNPQPYEITQIAQ.

Belongs to the universal ribosomal protein uL13 family. In terms of assembly, part of the 50S ribosomal subunit.

In terms of biological role, this protein is one of the early assembly proteins of the 50S ribosomal subunit, although it is not seen to bind rRNA by itself. It is important during the early stages of 50S assembly. This Cutibacterium acnes (strain DSM 16379 / KPA171202) (Propionibacterium acnes) protein is Large ribosomal subunit protein uL13.